Consider the following 428-residue polypeptide: Serine--tRNA ligase (428 aa).

231–233 provides a ligand contact to L-serine; sequence TAE. Residue 262 to 264 coordinates ATP; the sequence is RSE. Position 285 (E285) interacts with L-serine. 349–352 is an ATP binding site; that stretch reads EISS. Position 385 (S385) interacts with L-serine.

This sequence belongs to the class-II aminoacyl-tRNA synthetase family. Type-1 seryl-tRNA synthetase subfamily. In terms of assembly, homodimer. The tRNA molecule binds across the dimer.

It is found in the cytoplasm. The catalysed reaction is tRNA(Ser) + L-serine + ATP = L-seryl-tRNA(Ser) + AMP + diphosphate + H(+). The enzyme catalyses tRNA(Sec) + L-serine + ATP = L-seryl-tRNA(Sec) + AMP + diphosphate + H(+). Its pathway is aminoacyl-tRNA biosynthesis; selenocysteinyl-tRNA(Sec) biosynthesis; L-seryl-tRNA(Sec) from L-serine and tRNA(Sec): step 1/1. In terms of biological role, catalyzes the attachment of serine to tRNA(Ser). Is also able to aminoacylate tRNA(Sec) with serine, to form the misacylated tRNA L-seryl-tRNA(Sec), which will be further converted into selenocysteinyl-tRNA(Sec). The sequence is that of Serine--tRNA ligase from Staphylococcus epidermidis (strain ATCC 35984 / DSM 28319 / BCRC 17069 / CCUG 31568 / BM 3577 / RP62A).